A 309-amino-acid polypeptide reads, in one-letter code: 15-cis-phytoene synthase (309 aa).

Residues 290–309 form a disordered region; sequence LTSRMRAHPPRPAHLWQRPL.

The protein belongs to the phytoene/squalene synthase family. ATP serves as cofactor. It depends on Mn(2+) as a cofactor. Mg(2+) is required as a cofactor.

It carries out the reaction 2 (2E,6E,10E)-geranylgeranyl diphosphate = 15-cis-phytoene + 2 diphosphate. It functions in the pathway carotenoid biosynthesis; phytoene biosynthesis. With respect to regulation, inhibited by phosphate ions and squalestatin. Functionally, involved in the biosynthesis of carotenoids. Catalyzes the condensation of two molecules of geranylgeranyl diphosphate (GGPP) to give prephytoene diphosphate (PPPP) and the subsequent rearrangement of the cyclopropylcarbinyl intermediate to yield the 15-cis-phytoene isomer. This Pantoea ananas (Erwinia uredovora) protein is 15-cis-phytoene synthase (crtB).